The sequence spans 210 residues: Orotate phosphoribosyltransferase (210 aa).

5-phospho-alpha-D-ribose 1-diphosphate-binding positions include Arg96, Lys100, His102, and 122-130 (DDLISTGGS). Ser126 is an orotate binding site.

Belongs to the purine/pyrimidine phosphoribosyltransferase family. PyrE subfamily. In terms of assembly, homodimer. The cofactor is Mg(2+).

It carries out the reaction orotidine 5'-phosphate + diphosphate = orotate + 5-phospho-alpha-D-ribose 1-diphosphate. The protein operates within pyrimidine metabolism; UMP biosynthesis via de novo pathway; UMP from orotate: step 1/2. Functionally, catalyzes the transfer of a ribosyl phosphate group from 5-phosphoribose 1-diphosphate to orotate, leading to the formation of orotidine monophosphate (OMP). This is Orotate phosphoribosyltransferase from Levilactobacillus brevis (strain ATCC 367 / BCRC 12310 / CIP 105137 / JCM 1170 / LMG 11437 / NCIMB 947 / NCTC 947) (Lactobacillus brevis).